We begin with the raw amino-acid sequence, 344 residues long: N-acetyl-gamma-glutamyl-phosphate reductase (344 aa).

Cys-150 is an active-site residue.

This sequence belongs to the NAGSA dehydrogenase family. Type 1 subfamily.

The protein localises to the cytoplasm. The enzyme catalyses N-acetyl-L-glutamate 5-semialdehyde + phosphate + NADP(+) = N-acetyl-L-glutamyl 5-phosphate + NADPH + H(+). The protein operates within amino-acid biosynthesis; L-arginine biosynthesis; N(2)-acetyl-L-ornithine from L-glutamate: step 3/4. Its function is as follows. Catalyzes the NADPH-dependent reduction of N-acetyl-5-glutamyl phosphate to yield N-acetyl-L-glutamate 5-semialdehyde. The sequence is that of N-acetyl-gamma-glutamyl-phosphate reductase from Pseudomonas savastanoi pv. phaseolicola (strain 1448A / Race 6) (Pseudomonas syringae pv. phaseolicola (strain 1448A / Race 6)).